Consider the following 187-residue polypeptide: Endoribonuclease YbeY (187 aa).

Zn(2+) is bound by residues histidine 148, histidine 152, and histidine 158.

This sequence belongs to the endoribonuclease YbeY family. The cofactor is Zn(2+).

It is found in the cytoplasm. In terms of biological role, single strand-specific metallo-endoribonuclease involved in late-stage 70S ribosome quality control and in maturation of the 3' terminus of the 16S rRNA. The protein is Endoribonuclease YbeY of Ralstonia nicotianae (strain ATCC BAA-1114 / GMI1000) (Ralstonia solanacearum).